The sequence spans 397 residues: Tryptophan synthase beta chain (397 aa).

Residue Lys87 is modified to N6-(pyridoxal phosphate)lysine.

Belongs to the TrpB family. Tetramer of two alpha and two beta chains. Requires pyridoxal 5'-phosphate as cofactor.

It carries out the reaction (1S,2R)-1-C-(indol-3-yl)glycerol 3-phosphate + L-serine = D-glyceraldehyde 3-phosphate + L-tryptophan + H2O. Its pathway is amino-acid biosynthesis; L-tryptophan biosynthesis; L-tryptophan from chorismate: step 5/5. The beta subunit is responsible for the synthesis of L-tryptophan from indole and L-serine. The sequence is that of Tryptophan synthase beta chain from Escherichia coli O45:K1 (strain S88 / ExPEC).